An 880-amino-acid polypeptide reads, in one-letter code: Lon protease (880 aa).

The segment at M1–H37 is disordered. A compositionally biased stretch (basic and acidic residues) spans E27–H37. A Lon N-terminal domain is found at L57 to V251. ATP is bound at residue G404–T411. The Lon proteolytic domain occupies K640–G821. Active-site residues include S727 and K770. Over residues G826 to D836 the composition is skewed to gly residues. The disordered stretch occupies residues G826 to A880. Residues A852 to P861 are compositionally biased toward low complexity.

This sequence belongs to the peptidase S16 family. Homohexamer. Organized in a ring with a central cavity.

It is found in the cytoplasm. It catalyses the reaction Hydrolysis of proteins in presence of ATP.. ATP-dependent serine protease that mediates the selective degradation of mutant and abnormal proteins as well as certain short-lived regulatory proteins. Required for cellular homeostasis and for survival from DNA damage and developmental changes induced by stress. Degrades polypeptides processively to yield small peptide fragments that are 5 to 10 amino acids long. Binds to DNA in a double-stranded, site-specific manner. This chain is Lon protease, found in Desulfovibrio desulfuricans (strain ATCC 27774 / DSM 6949 / MB).